The primary structure comprises 268 residues: Mediator of RNA polymerase II transcription subunit 8 (268 aa).

A coiled-coil region spans residues 1-28 (MQREEKQLEASLDALLSQVADLKNSLGS). Ser82 carries the phosphoserine modification. Positions 133–163 (ADAAQKQIQSLNKMCSNLLEKISKEERESES) form a coiled coil. The tract at residues 142–151 (SLNKMCSNLL) is interaction with the Elongin BC complex. 2 disordered regions span residues 156–176 (KEER…FNPT) and 193–268 (NWRP…PYQR). Gly residues predominate over residues 200–209 (SGPGQAGQPG). Positions 218–235 (SGLQQVQMAGAPSQQQPM) are enriched in polar residues.

It belongs to the Mediator complex subunit 8 family. Component of the Mediator complex, which is composed of MED1, MED4, MED6, MED7, MED8, MED9, MED10, MED11, MED12, MED13, MED13L, MED14, MED15, MED16, MED17, MED18, MED19, MED20, MED21, MED22, MED23, MED24, MED25, MED26, MED27, MED29, MED30, MED31, CCNC, CDK8 and CDC2L6/CDK11. The MED12, MED13, CCNC and CDK8 subunits form a distinct module termed the CDK8 module. Mediator containing the CDK8 module is less active than Mediator lacking this module in supporting transcriptional activation. Individual preparations of the Mediator complex lacking one or more distinct subunits have been variously termed ARC, CRSP, DRIP, PC2, SMCC and TRAP. May be part of a multisubunit E3 ubiquitin-protein ligase complex with the elongin BC complex (ELOB and ELOC), CUL2 and RBX1.

It is found in the nucleus. It functions in the pathway protein modification; protein ubiquitination. Component of the Mediator complex, a coactivator involved in the regulated transcription of nearly all RNA polymerase II-dependent genes. Mediator functions as a bridge to convey information from gene-specific regulatory proteins to the basal RNA polymerase II transcription machinery. Mediator is recruited to promoters by direct interactions with regulatory proteins and serves as a scaffold for the assembly of a functional preinitiation complex with RNA polymerase II and the general transcription factors. May play a role as a target recruitment subunit in E3 ubiquitin-protein ligase complexes and thus in ubiquitination and subsequent proteasomal degradation of target proteins. In Homo sapiens (Human), this protein is Mediator of RNA polymerase II transcription subunit 8 (MED8).